Reading from the N-terminus, the 393-residue chain is tRNA(Met) cytidine acetate ligase (393 aa).

ATP-binding residues include glycine 81, asparagine 142, and arginine 167.

Belongs to the TmcAL family.

The protein localises to the cytoplasm. It catalyses the reaction cytidine(34) in elongator tRNA(Met) + acetate + ATP = N(4)-acetylcytidine(34) in elongator tRNA(Met) + AMP + diphosphate. Functionally, catalyzes the formation of N(4)-acetylcytidine (ac(4)C) at the wobble position of elongator tRNA(Met), using acetate and ATP as substrates. First activates an acetate ion to form acetyladenylate (Ac-AMP) and then transfers the acetyl group to tRNA to form ac(4)C34. The polypeptide is tRNA(Met) cytidine acetate ligase (Bacillus mycoides (strain KBAB4) (Bacillus weihenstephanensis)).